The primary structure comprises 313 residues: Olfactory receptor 8C8 (313 aa).

Over 1–27 the chain is Extracellular; the sequence is MMQITMENKSSVSEFILMGLTDQPELQ. Residue N8 is glycosylated (N-linked (GlcNAc...) asparagine). Residues 28-48 form a helical membrane-spanning segment; the sequence is LPLFVLFLMNYTATVMGNLTL. Residues 49–59 are Cytoplasmic-facing; it reads MNLICLNSNLH. A helical membrane pass occupies residues 60-80; the sequence is TPMYFFLFNLSFIDFCYSMVF. Over 81-96 the chain is Extracellular; the sequence is TPKMLMSFILEKNTIS. The helical transmembrane segment at 97 to 117 threads the bilayer; it reads FGGCMAQLFFFLFFVNSESYV. A disulfide bond links C100 and C192. Residues 118–136 are Cytoplasmic-facing; it reads LTAMAYDRYVAICKPLTYK. A helical membrane pass occupies residues 137-157; it reads VIMSPKICCLLIFSSYLMGFA. The Extracellular portion of the chain corresponds to 158-208; it reads SAMAHTGCMIRLSFCDSNIINHYMCDIFPLLPLSCSSTYVNELMSSVVVGS. Residues 209–229 form a helical membrane-spanning segment; the sequence is AIILCCLIILISYAMILFNII. Topologically, residues 230–239 are cytoplasmic; that stretch reads HMSSGKGWSK. The chain crosses the membrane as a helical span at residues 240 to 260; it reads ALGTCGSHIITVSLFYGSGLL. Residues 261–274 are Extracellular-facing; it reads AYVKPSSAKTVGQG. Residues 275 to 295 traverse the membrane as a helical segment; the sequence is KFFSVFYTLLVPMLNPLIYSL. The Cytoplasmic portion of the chain corresponds to 296 to 313; that stretch reads RNKDVKLAVKKTWKRITS.

It belongs to the G-protein coupled receptor 1 family. In terms of tissue distribution, expressed in neurons in the olfactory epithelium.

It is found in the cell membrane. In terms of biological role, potential odorant receptor. The polypeptide is Olfactory receptor 8C8 (Mus musculus (Mouse)).